Reading from the N-terminus, the 865-residue chain is Leucine--tRNA ligase (865 aa).

Residues 58-68 (PYPSGNLHMGH) carry the 'HIGH' region motif. Positions 629–633 (KMSKS) match the 'KMSKS' region motif. Residue K632 participates in ATP binding.

It belongs to the class-I aminoacyl-tRNA synthetase family.

The protein localises to the cytoplasm. It catalyses the reaction tRNA(Leu) + L-leucine + ATP = L-leucyl-tRNA(Leu) + AMP + diphosphate. This Synechococcus elongatus (strain ATCC 33912 / PCC 7942 / FACHB-805) (Anacystis nidulans R2) protein is Leucine--tRNA ligase.